A 132-amino-acid chain; its full sequence is Small ribosomal subunit protein uS8c (132 aa).

The protein belongs to the universal ribosomal protein uS8 family. As to quaternary structure, part of the 30S ribosomal subunit.

Its subcellular location is the plastid. The protein localises to the chloroplast. One of the primary rRNA binding proteins, it binds directly to 16S rRNA central domain where it helps coordinate assembly of the platform of the 30S subunit. This chain is Small ribosomal subunit protein uS8c (rps8), found in Amborella trichopoda.